Here is a 524-residue protein sequence, read N- to C-terminus: Probable cytosol aminopeptidase (524 aa).

The Mn(2+) site is built by K288 and D293. Residue K300 is part of the active site. The Mn(2+) site is built by D311, D370, and E372. The active site involves R374.

This sequence belongs to the peptidase M17 family. Mn(2+) serves as cofactor.

The protein resides in the cytoplasm. The enzyme catalyses Release of an N-terminal amino acid, Xaa-|-Yaa-, in which Xaa is preferably Leu, but may be other amino acids including Pro although not Arg or Lys, and Yaa may be Pro. Amino acid amides and methyl esters are also readily hydrolyzed, but rates on arylamides are exceedingly low.. It catalyses the reaction Release of an N-terminal amino acid, preferentially leucine, but not glutamic or aspartic acids.. Functionally, presumably involved in the processing and regular turnover of intracellular proteins. Catalyzes the removal of unsubstituted N-terminal amino acids from various peptides. The protein is Probable cytosol aminopeptidase (pepA) of Mycobacterium leprae (strain TN).